The sequence spans 258 residues: Phosphate import ATP-binding protein PstB (258 aa).

One can recognise an ABC transporter domain in the interval 13-253 (IEVENLNLWY…PKEQSTEDYI (241 aa)). Position 45-52 (45-52 (GPSGCGKS)) interacts with ATP.

Belongs to the ABC transporter superfamily. Phosphate importer (TC 3.A.1.7) family. In terms of assembly, the complex is composed of two ATP-binding proteins (PstB), two transmembrane proteins (PstC and PstA) and a solute-binding protein (PstS).

It localises to the cell membrane. The catalysed reaction is phosphate(out) + ATP + H2O = ADP + 2 phosphate(in) + H(+). Part of the ABC transporter complex PstSACB involved in phosphate import. Responsible for energy coupling to the transport system. The sequence is that of Phosphate import ATP-binding protein PstB from Methanosarcina acetivorans (strain ATCC 35395 / DSM 2834 / JCM 12185 / C2A).